The primary structure comprises 250 residues: Probable replication-associated protein repA2 (250 aa).

This sequence belongs to the IncFII RepA family.

Functionally, this protein is essential for plasmid replication; it is involved in copy control functions. This is Probable replication-associated protein repA2 (repA2) from Buchnera aphidicola subsp. Schizaphis graminum (strain Sg).